Reading from the N-terminus, the 247-residue chain is tRNA pseudouridine synthase A (247 aa).

The active-site Nucleophile is the aspartate 52. Tyrosine 111 contributes to the substrate binding site.

This sequence belongs to the tRNA pseudouridine synthase TruA family. As to quaternary structure, homodimer.

It catalyses the reaction uridine(38/39/40) in tRNA = pseudouridine(38/39/40) in tRNA. In terms of biological role, formation of pseudouridine at positions 38, 39 and 40 in the anticodon stem and loop of transfer RNAs. The polypeptide is tRNA pseudouridine synthase A (Erythrobacter litoralis (strain HTCC2594)).